Reading from the N-terminus, the 354-residue chain is Hyaluronan and proteoglycan link protein 1 (354 aa).

The propeptide occupies 1–15 (MKSLLLLVLISICGA). Asparagine 21 and asparagine 56 each carry an N-linked (GlcNAc...) asparagine glycan. Residues 38–152 (PRLLVEAEQA…EGLEDDTAVV (115 aa)) enclose the Ig-like V-type domain. 5 cysteine pairs are disulfide-bonded: cysteine 61–cysteine 139, cysteine 181–cysteine 252, cysteine 205–cysteine 226, cysteine 279–cysteine 349, and cysteine 304–cysteine 325. Link domains are found at residues 159–254 (VVFP…FCFT) and 259–351 (GRFY…YCFR).

The protein belongs to the HAPLN family.

Its subcellular location is the secreted. It is found in the extracellular space. It localises to the extracellular matrix. Functionally, stabilizes the aggregates of proteoglycan monomers with hyaluronic acid in the extracellular cartilage matrix. This chain is Hyaluronan and proteoglycan link protein 1 (HAPLN1), found in Equus caballus (Horse).